A 1487-amino-acid polypeptide reads, in one-letter code: Chromosome partition protein MukB (1487 aa).

Residue glycine 34–serine 41 coordinates ATP. Coiled-coil stretches lie at residues glycine 297 to leucine 458, arginine 506 to isoleucine 601, leucine 637 to serine 666, arginine 781 to alanine 806, glutamate 836 to threonine 1109, and valine 1210 to isoleucine 1266. Residues proline 667–arginine 784 are flexible hinge.

This sequence belongs to the SMC family. MukB subfamily. As to quaternary structure, homodimerization via its hinge domain. Binds to DNA via its C-terminal region. Interacts, and probably forms a ternary complex, with MukE and MukF via its C-terminal region. The complex formation is stimulated by calcium or magnesium. Interacts with tubulin-related protein FtsZ.

The protein localises to the cytoplasm. Its subcellular location is the nucleoid. Its function is as follows. Plays a central role in chromosome condensation, segregation and cell cycle progression. Functions as a homodimer, which is essential for chromosome partition. Involved in negative DNA supercoiling in vivo, and by this means organize and compact chromosomes. May achieve or facilitate chromosome segregation by condensation DNA from both sides of a centrally located replisome during cell division. The polypeptide is Chromosome partition protein MukB (Vibrio parahaemolyticus serotype O3:K6 (strain RIMD 2210633)).